Reading from the N-terminus, the 460-residue chain is UDP-N-acetylmuramate--L-alanine ligase (460 aa).

ATP is bound at residue 112-118 (GTHGKTT).

This sequence belongs to the MurCDEF family.

The protein localises to the cytoplasm. The enzyme catalyses UDP-N-acetyl-alpha-D-muramate + L-alanine + ATP = UDP-N-acetyl-alpha-D-muramoyl-L-alanine + ADP + phosphate + H(+). Its pathway is cell wall biogenesis; peptidoglycan biosynthesis. In terms of biological role, cell wall formation. The sequence is that of UDP-N-acetylmuramate--L-alanine ligase from Pelobacter propionicus (strain DSM 2379 / NBRC 103807 / OttBd1).